We begin with the raw amino-acid sequence, 419 residues long: Serine hydroxymethyltransferase (419 aa).

(6S)-5,6,7,8-tetrahydrofolate contacts are provided by residues Leu118 and 122-124; that span reads GHL. N6-(pyridoxal phosphate)lysine is present on Lys227.

Belongs to the SHMT family. In terms of assembly, homodimer. The cofactor is pyridoxal 5'-phosphate.

It is found in the cytoplasm. The catalysed reaction is (6R)-5,10-methylene-5,6,7,8-tetrahydrofolate + glycine + H2O = (6S)-5,6,7,8-tetrahydrofolate + L-serine. The protein operates within one-carbon metabolism; tetrahydrofolate interconversion. It functions in the pathway amino-acid biosynthesis; glycine biosynthesis; glycine from L-serine: step 1/1. Its function is as follows. Catalyzes the reversible interconversion of serine and glycine with tetrahydrofolate (THF) serving as the one-carbon carrier. This reaction serves as the major source of one-carbon groups required for the biosynthesis of purines, thymidylate, methionine, and other important biomolecules. Also exhibits THF-independent aldolase activity toward beta-hydroxyamino acids, producing glycine and aldehydes, via a retro-aldol mechanism. The protein is Serine hydroxymethyltransferase of Chloroflexus aurantiacus (strain ATCC 29364 / DSM 637 / Y-400-fl).